Consider the following 123-residue polypeptide: S-adenosylmethionine decarboxylase proenzyme 2 (123 aa).

Residue S65 is the Schiff-base intermediate with substrate; via pyruvic acid of the active site. A Pyruvic acid (Ser); by autocatalysis modification is found at S65. H70 functions as the Proton acceptor; for processing activity in the catalytic mechanism. Residue C85 is the Proton donor; for catalytic activity of the active site.

This sequence belongs to the prokaryotic AdoMetDC family. Type 1 subfamily. In terms of assembly, heterotetramer of two alpha and two beta chains arranged as a dimer of alpha/beta heterodimers. Pyruvate serves as cofactor. In terms of processing, is synthesized initially as an inactive proenzyme. Formation of the active enzyme involves a self-maturation process in which the active site pyruvoyl group is generated from an internal serine residue via an autocatalytic post-translational modification. Two non-identical subunits are generated from the proenzyme in this reaction, and the pyruvate is formed at the N-terminus of the alpha chain, which is derived from the carboxyl end of the proenzyme. The post-translation cleavage follows an unusual pathway, termed non-hydrolytic serinolysis, in which the side chain hydroxyl group of the serine supplies its oxygen atom to form the C-terminus of the beta chain, while the remainder of the serine residue undergoes an oxidative deamination to produce ammonia and the pyruvoyl group blocking the N-terminus of the alpha chain.

The enzyme catalyses S-adenosyl-L-methionine + H(+) = S-adenosyl 3-(methylsulfanyl)propylamine + CO2. Its pathway is amine and polyamine biosynthesis; S-adenosylmethioninamine biosynthesis; S-adenosylmethioninamine from S-adenosyl-L-methionine: step 1/1. Its function is as follows. Catalyzes the decarboxylation of S-adenosylmethionine to S-adenosylmethioninamine (dcAdoMet), the propylamine donor required for the synthesis of the polyamines spermine and spermidine from the diamine putrescine. The chain is S-adenosylmethionine decarboxylase proenzyme 2 from Bacillus cereus (strain ATCC 14579 / DSM 31 / CCUG 7414 / JCM 2152 / NBRC 15305 / NCIMB 9373 / NCTC 2599 / NRRL B-3711).